The primary structure comprises 710 residues: Polyribonucleotide nucleotidyltransferase (710 aa).

2 residues coordinate Mg(2+): D487 and D493. The KH domain maps to 554–613; sequence PRIEVMNIPVDKIREVIGSGGKVIREIVEKTGAKINIEDDGTVKIASSSGKEIEAARKWI. Residues 623–691 form the S1 motif domain; that stretch reads GQIYEGTVVK…ERGKVRLSMK (69 aa).

The protein belongs to the polyribonucleotide nucleotidyltransferase family. Mg(2+) serves as cofactor.

It is found in the cytoplasm. It carries out the reaction RNA(n+1) + phosphate = RNA(n) + a ribonucleoside 5'-diphosphate. Involved in mRNA degradation. Catalyzes the phosphorolysis of single-stranded polyribonucleotides processively in the 3'- to 5'-direction. In Rhizobium rhizogenes (strain K84 / ATCC BAA-868) (Agrobacterium radiobacter), this protein is Polyribonucleotide nucleotidyltransferase.